Here is a 372-residue protein sequence, read N- to C-terminus: N-methyl-L-tryptophan oxidase (372 aa).

FAD is bound at residue 4 to 34 (DLIIIGSGSVGAAAGYYATRAGLKVLMTDAH). C307 carries the S-8alpha-FAD cysteine modification.

This sequence belongs to the MSOX/MTOX family. MTOX subfamily. In terms of assembly, monomer. It depends on FAD as a cofactor.

The enzyme catalyses N(alpha)-methyl-L-tryptophan + O2 + H2O = L-tryptophan + formaldehyde + H2O2. Functionally, catalyzes the oxidative demethylation of N-methyl-L-tryptophan. In Salmonella newport (strain SL254), this protein is N-methyl-L-tryptophan oxidase.